A 177-amino-acid chain; its full sequence is Thymidine kinase (177 aa).

An ATP-binding site is contributed by Gly-11–Ser-18. Catalysis depends on Glu-83, which acts as the Proton acceptor. Phe-113 is a binding site for substrate. Zn(2+) is bound by residues Cys-138 and Cys-141. Ile-157–Gly-161 contacts substrate. Positions 170 and 173 each coordinate Zn(2+).

Belongs to the thymidine kinase family.

It catalyses the reaction thymidine + ATP = dTMP + ADP + H(+). The protein is Thymidine kinase (TK) of Sheeppox virus (strain KS-1) (SPPV).